The primary structure comprises 523 residues: Leucine-rich repeat transmembrane neuronal protein 1 (523 aa).

The signal sequence occupies residues 1–34 (MDFLLLGLCLHWLLRRPSGVVLCLLGACFQMLPA). One can recognise an LRRNT domain in the interval 35–63 (APSGCPGQCRCEGRLLYCEALNLTEAPHN). Over 35 to 428 (APSGCPGQCR…HAENAVQIHK (394 aa)) the chain is Extracellular. Residues Asn56 and Asn63 are each glycosylated (N-linked (GlcNAc...) asparagine). LRR repeat units follow at residues 64–87 (LSGL…QFTG), 89–111 (MQLT…AFQK), 112–135 (LRRV…TFRP), 136–159 (MPNL…LFHG), 161–183 (RKLT…IFQD), 184–207 (CRSL…SFAG), 209–231 (FKLT…HFPR), 233–255 (ISLN…LDWV), 256–278 (WNLE…VFET), and 280–302 (PYLQ…ILNS). The N-linked (GlcNAc...) asparagine glycan is linked to Asn130. Residues 314–365 (NLWDCGRNVCALASWLSNFQGRYDANLQCASPEYAQGEDVLDAVYAFHLCED) form the LRRCT domain. Asn381 is a glycosylation site (N-linked (GlcNAc...) asparagine). A helical transmembrane segment spans residues 429-449 (VVTGTMALIFSFLIVVLVLYV). At 450–523 (SWKCFPASLR…HQQPARECEV (74 aa)) the chain is on the cytoplasmic side. A May be involved in DLG4-binding motif is present at residues 520 to 523 (ECEV).

The protein belongs to the LRRTM family. In terms of assembly, interacts with DLG4.

Its subcellular location is the cell membrane. It localises to the postsynaptic cell membrane. Its function is as follows. Exhibits strong synaptogenic activity, restricted to excitatory presynaptic differentiation, acting at both pre- and postsynaptic level. This chain is Leucine-rich repeat transmembrane neuronal protein 1 (Lrrtm1), found in Rattus norvegicus (Rat).